The sequence spans 2792 residues: E3 ubiquitin-protein ligase UBR5 (2792 aa).

An N-acetylthreonine modification is found at threonine 2. The span at 77-88 (DRLELGKPDNND) shows a compositional bias: basic and acidic residues. The segment at 77-175 (DRLELGKPDN…DRGSGLLGSQ (99 aa)) is disordered. The segment covering 94–111 (SSSGTGRTSRPGRTSDSP) has biased composition (low complexity). Serine 110 is modified (phosphoserine). Over residues 135–144 (GVGGSGGGSS) the composition is skewed to gly residues. One can recognise a UBA domain in the interval 184 to 226 (VIPEELISQAQVVLQGKSRSVIIRELQRTNLDVNLAVNNLLSR). Serine 321 is modified (phosphoserine). Basic and acidic residues predominate over residues 322–341 (FDNERGSTSKEGESNPDKKN). A disordered region spans residues 322 to 347 (FDNERGSTSKEGESNPDKKNTPVQSP). Serine 346 and serine 572 each carry phosphoserine. Residues 577–598 (KSMEKASKTLETKPESKQEPVK) show a composition bias toward basic and acidic residues. Residues 577–642 (KSMEKASKTL…APREEEKVNE (66 aa)) form a disordered region. Serine 606 is subject to Phosphoserine. Low complexity predominate over residues 608-622 (ASTCSDASSIASSAS). Threonine 631 is subject to Phosphothreonine. Phosphoserine is present on residues serine 802, serine 922, and serine 1012. 2 disordered regions span residues 993-1029 (AGLGRHEAGASSSDHQDPVSPPIAPPSWVPDPPSMDP) and 1046-1069 (TAATGSGQGPSTSTIPGPSTEPSV). The segment covering 1011-1027 (VSPPIAPPSWVPDPPSM) has biased composition (pro residues). Positions 1046-1067 (TAATGSGQGPSTSTIPGPSTEP) are enriched in polar residues. Residues threonine 1109 and threonine 1129 each carry the phosphothreonine modification. The UBR-type zinc-finger motif lies at 1171 to 1239 (DTCSFTWTGA…EKCKCKTLIA (69 aa)). 5 positions are modified to phosphoserine: serine 1221, serine 1302, serine 1349, serine 1369, and serine 1475. Residues 1293 to 1312 (REDRNRKTASPEDSDMPDHD) are disordered. The interval 1509 to 1734 (SVEPLPPRPS…PSSTSTPAAS (226 aa)) is disordered. Residues 1518–1531 (SSDQASSSSQSQSS) show a composition bias toward low complexity. Polar residues predominate over residues 1532 to 1547 (YIIRNPQQRRISQSQP). Position 1543 is a phosphoserine (serine 1543). 2 stretches are compositionally biased toward acidic residues: residues 1553-1568 (EEQDDIVSADVEEVEV) and 1599-1608 (HDEDGSDMEL). Polar residues predominate over residues 1623–1632 (NHSNQDNASG). Low complexity-rich tracts occupy residues 1635-1651 (SVVTAATAGSEAGASSV), 1662-1675 (SNDSSDSDSSSSQS), and 1720-1734 (AASTAPSSTSTPAAS). Threonine 1730 carries the post-translational modification Phosphothreonine. Serine 1735 carries the post-translational modification Phosphoserine. Phosphotyrosine is present on tyrosine 1740. Phosphoserine is present on serine 1774. The tract at residues 1853–1884 (LASAGDPGHPNHPLHASQNSARRERMTAREEA) is disordered. A compositionally biased stretch (basic and acidic residues) spans 1873 to 1884 (ARRERMTAREEA). Threonine 1963 carries the post-translational modification Phosphothreonine. Residues 1978 to 2015 (GIDNEDSEHENDDDTSQSATLNDKDDDSLPAETGQNHP) form a disordered region. Acidic residues predominate over residues 1979–1992 (IDNEDSEHENDDDT). 3 positions are modified to phosphoserine: serine 1984, serine 2020, and serine 2022. Residue threonine 2024 is modified to Phosphothreonine. Serine 2070 is subject to Phosphoserine. The disordered stretch occupies residues 2111–2137 (RQKKEGEEQSLLAEEADSSKPGPSAPD). A Phosphothreonine modification is found at threonine 2207. 2 positions are modified to phosphoserine: serine 2235 and serine 2283. Residues 2317–2387 (HTSLMQRLRN…SDDPDPLPAH (71 aa)) form a disordered region. Basic and acidic residues-rich tracts occupy residues 2326–2342 (NRGERDREREREREMRR) and 2350–2362 (SRRDRDRDFRRQL). The PABC domain maps to 2371–2448 (PASEGNPSDD…AMELIIAHGR (78 aa)). Positions 2455–2792 (ILDLGLLDSS…AIKTKNFGFV (338 aa)) constitute an HECT domain. 3 positions are modified to phosphoserine: serine 2463, serine 2477, and serine 2479. The tract at residues 2467–2494 (VQENRKRHGSSRSVVDMDLEDTDDGDDN) is disordered. The segment covering 2483-2493 (MDLEDTDDGDD) has biased composition (acidic residues). Cysteine 2761 (glycyl thioester intermediate) is an active-site residue.

It belongs to the UBR5 family. Homotetramer; composed of a dimer of dimers. Associates with CDK9 and TFIIS/TCEA1 and forms a transcription regulatory complex made of CDK9, RNAP II, UBR5 and TFIIS/TCEA1 that can stimulate target gene transcription (e.g. gamma fibrinogen/FGG) by recruiting their promoters. Associates with the E3 ligase complex containing DYRK2, EDD/UBR5, DDB1 and DCAF1 proteins (EDVP complex). Binds TOPBP1. Interacts with PIH1D1. Interacts with CIB1.

It localises to the nucleus. It is found in the cytoplasm. It carries out the reaction S-ubiquitinyl-[E2 ubiquitin-conjugating enzyme]-L-cysteine + [acceptor protein]-L-lysine = [E2 ubiquitin-conjugating enzyme]-L-cysteine + N(6)-ubiquitinyl-[acceptor protein]-L-lysine.. It participates in protein modification; protein ubiquitination. In terms of biological role, E3 ubiquitin-protein ligase involved in different protein quality control pathways in the cytoplasm and nucleus. Mainly acts as a ubiquitin chain elongator that extends pre-ubiquitinated substrates. Component of the N-end rule pathway: ubiquitinates proteins bearing specific N-terminal residues that are destabilizing according to the N-end rule, leading to their degradation. Recognizes type-1 N-degrons, containing positively charged amino acids (Arg, Lys and His). Together with UBR4, part of a cytoplasm protein quality control pathway that prevents protein aggregation by catalyzing assembly of heterotypic 'Lys-11'-/'Lys-48'-linked branched ubiquitin chains on aggregated proteins, leading to substrate recognition by the segregase p97/VCP and degradation by the proteasome: UBR5 is probably branching multiple 'Lys-48'-linked chains of substrates initially modified with mixed conjugates by UBR4. Together with ITCH, catalyzes 'Lys-48'-/'Lys-63'-branched ubiquitination of TXNIP, leading to its degradation: UBR5 mediates branching of 'Lys-48'-linked chains of substrates initially modified with 'Lys-63'-linked conjugates by ITCH. Catalytic component of a nuclear protein quality control pathway that mediates ubiquitination and degradation of unpaired transcription factors (i.e. transcription factors that are not assembled into functional multiprotein complexes): specifically recognizes and binds degrons that are not accessible when transcription regulators are associated with their coactivators. Ubiquitinates various unpaired transcription regulator (MYC, SUPT4H1, SUPT5H, CDC20 and MCRS1), as well as ligand-bound nuclear receptors (ESR1, NR1H3, NR3C1, PGR, RARA, RXRA AND VDR) that are not associated with their nuclear receptor coactivators (NCOAs). Involved in maturation and/or transcriptional regulation of mRNA by mediating polyubiquitination and activation of CDK9. Also acts as a regulator of DNA damage response by acting as a suppressor of RNF168, an E3 ubiquitin-protein ligase that promotes accumulation of 'Lys-63'-linked histone H2A and H2AX at DNA damage sites, thereby acting as a guard against excessive spreading of ubiquitinated chromatin at damaged chromosomes. Regulates DNA topoisomerase II binding protein (TopBP1) in the DNA damage response. Ubiquitinates acetylated PCK1. Acts as a positive regulator of the canonical Wnt signaling pathway by mediating (1) ubiquitination and stabilization of CTNNB1, and (2) 'Lys-48'-linked ubiquitination and degradation of TLE3. Promotes disassembly of the mitotic checkpoint complex (MCC) from the APC/C complex by catalyzing ubiquitination of BUB1B, BUB3 and CDC20. Plays an essential role in extraembryonic development. Required for the maintenance of skeletal tissue homeostasis by acting as an inhibitor of hedgehog (HH) signaling. The polypeptide is E3 ubiquitin-protein ligase UBR5 (Mus musculus (Mouse)).